A 412-amino-acid polypeptide reads, in one-letter code: Nuclear hormone receptor family member nhr-61 (412 aa).

Over residues 1–19 (MIVDSISSSTASTSSSSPT) the composition is skewed to low complexity. A disordered region spans residues 1–23 (MIVDSISSSTASTSSSSPTRGTP). The nuclear receptor DNA-binding region spans 27 to 102 (SLQCAVCGDV…VGMNPRAVQG (76 aa)). 2 consecutive NR C4-type zinc fingers follow at residues 30 to 50 (CAVC…CNGC) and 66 to 90 (CRHG…LTRC). Residues 144–407 (KKEQIIDNLR…DWSQELRDHR (264 aa)) form the NR LBD domain.

Belongs to the nuclear hormone receptor family.

The protein resides in the nucleus. Orphan nuclear receptor. This Caenorhabditis elegans protein is Nuclear hormone receptor family member nhr-61 (nhr-61).